The primary structure comprises 646 residues: Lipoteichoic acid synthase (646 aa).

Topologically, residues 1 to 7 (MSSQKKK) are cytoplasmic. The chain crosses the membrane as a helical span at residues 8–28 (ISLFAFFLLTVITITLKTYFS). Topologically, residues 29–43 (YYVDFSLGVKGLVQN) are extracellular. Residues 44-64 (LILLMNPYSLVALVLSVFLFF) traverse the membrane as a helical segment. The Cytoplasmic portion of the chain corresponds to 65-68 (KGKK). The helical transmembrane segment at 69–89 (AFWFMFIGGFLLTFLLYANVV) threads the bilayer. Over 90–119 (YFRFFSDFLTFSTLNQVGNVESMGGAVSAS) the chain is Extracellular. Residues 120 to 140 (FKWYDFVYFIDTLVYLFILIF) traverse the membrane as a helical segment. Topologically, residues 141-153 (KTKWLDTKAFSKK) are cytoplasmic. The helical transmembrane segment at 154–174 (FVPVVMAASVALFFLNLAFAE) threads the bilayer. Topologically, residues 175–646 (TDRPELLTRT…ETGPKANSKK (472 aa)) are extracellular. Glutamate 255 and threonine 300 together coordinate Mn(2+). The active site involves threonine 300. Histidine 416 lines the substrate pocket. The Mn(2+) site is built by aspartate 475 and histidine 476. Residues 623 to 638 (NPDFKKVNPSKYKYET) are compositionally biased toward basic and acidic residues. A disordered region spans residues 623 to 646 (NPDFKKVNPSKYKYETGPKANSKK).

Belongs to the LTA synthase family. In terms of processing, proteolytically cleaved.

It is found in the cell membrane. The protein localises to the secreted. Its pathway is cell wall biogenesis; lipoteichoic acid biosynthesis. Its function is as follows. Catalyzes the polymerization of lipoteichoic acid (LTA) polyglycerol phosphate, a reaction that presumably uses phosphatidylglycerol (PG) as substrate. Is required for staphylococcal growth and cell division process. The protein is Lipoteichoic acid synthase (ltaS) of Staphylococcus aureus (strain USA300).